The sequence spans 378 residues: MTLSINDQNKLDAFWAYCVKNQYFNIGYPESADFDYTNLERFLRFSINNCGDWGEYCNYLLNSFDFEKEVMEYFADLFKIPFEQSWGYVTNGGTEGNMFGCYLGREIFPDGTLYYSKDTHYSVAKIVKLLRIKSQVVESQPNGEIDYDDLMKKIADDKEAHPIIFANIGTTVRGAIDDIAEIQKRLKAAGIKREDYYLHADAALSGMILPFVDDAQPFTFADGIDSIGVSGHKMIGSPIPCGIVVAKKENVDRISVEIDYISAHDKTITGSRNGHTPLMLWEAIRSHSTEEWKRRITRSLDMAQYAVDRMQKAGINAWRNKNSITVVFPCPSERVWREHCLATSGDVAHLITTAHHLDTVQIDKLIDDVIADFNLHAA.

Histidine 120 is a binding site for substrate. Lysine 233 is subject to N6-(pyridoxal phosphate)lysine. Residue serine 323 is part of the active site.

This sequence belongs to the group II decarboxylase family. As to quaternary structure, homotetramer. The cofactor is pyridoxal 5'-phosphate.

It catalyses the reaction L-histidine + H(+) = histamine + CO2. This chain is Histidine decarboxylase (hdc), found in Morganella morganii (Proteus morganii).